Reading from the N-terminus, the 182-residue chain is Probable RNA 2'-phosphotransferase (182 aa).

Belongs to the KptA/TPT1 family.

Its function is as follows. Removes the 2'-phosphate from RNA via an intermediate in which the phosphate is ADP-ribosylated by NAD followed by a presumed transesterification to release the RNA and generate ADP-ribose 1''-2''-cyclic phosphate (APPR&gt;P). May function as an ADP-ribosylase. This is Probable RNA 2'-phosphotransferase from Acetivibrio thermocellus (strain ATCC 27405 / DSM 1237 / JCM 9322 / NBRC 103400 / NCIMB 10682 / NRRL B-4536 / VPI 7372) (Clostridium thermocellum).